Reading from the N-terminus, the 900-residue chain is Phosphoenolpyruvate carboxylase (900 aa).

Catalysis depends on residues His-140 and Lys-568.

Belongs to the PEPCase type 1 family. The cofactor is Mg(2+).

It catalyses the reaction oxaloacetate + phosphate = phosphoenolpyruvate + hydrogencarbonate. Functionally, forms oxaloacetate, a four-carbon dicarboxylic acid source for the tricarboxylic acid cycle. This Neisseria meningitidis serogroup A / serotype 4A (strain DSM 15465 / Z2491) protein is Phosphoenolpyruvate carboxylase.